Reading from the N-terminus, the 484-residue chain is Suppressor of fused homolog (484 aa).

Residues 1-24 (MAELRPSGAPGPTAPPAPGPTAPP) are disordered. The span at 12-23 (PTAPPAPGPTAP) shows a compositional bias: pro residues. K257 participates in a covalent cross-link: Glycyl lysine isopeptide (Lys-Gly) (interchain with G-Cter in ubiquitin). The segment at 279–360 (SRPPEDDEDS…SSTAIIPHEL (82 aa)) is disordered. Phosphoserine is present on S301. K303 bears the N6-acetyllysine mark. Residue K321 forms a Glycyl lysine isopeptide (Lys-Gly) (interchain with G-Cter in SUMO2) linkage. The span at 336–347 (AHDRAPSRKDSL) shows a compositional bias: basic and acidic residues. 3 positions are modified to phosphoserine: S342, S346, and S352. A Phosphothreonine modification is found at T353. Phosphoserine is present on S481.

This sequence belongs to the SUFU family. May form homodimers. Part of a DNA-bound corepressor complex containing SAP18, GLI1 and SIN3. Part of a complex containing CTNNB1. Binds BTRC, GLI2, GLI3, SAP18 and STK36. Binds both free and DNA-bound GLI1. Interacts with KIF7. Interacts with GLI3FL and this interaction regulates the formation of either repressor or activator forms of GLI3. Its association with GLI3FL is regulated by Hh signaling and dissociation of the SUFU-GLI3 interaction requires the presence of the ciliary motor KIF3A. Interacts with ULK3; inactivating the protein kinase activity of ULK3. Interacts with RAB23. Polyubiquitinated at Lys-257 by the SCF(FBXL17) complex, leading to its subsequent degradation and allowing the release of GLI1 for proper hedgehog/smoothened signal transduction. Ubiquitination is impaired by phosphorylation at Ser-342, Ser-346, Ser-352 and Thr-353. In terms of processing, phosphorylation at Ser-342, Ser-346, Ser-352 and Thr-353 prevents ubiquitination by the SCF(FBXL17) complex. Ubiquitous in adult tissues. Detected in osteoblasts of the perichondrium in the developing limb of 12-week old embryos. Isoform 1 is detected in fetal brain, lung, kidney and testis. Isoform 2 is detected in fetal testis, and at much lower levels in fetal brain, lung and kidney.

Its subcellular location is the cytoplasm. It localises to the nucleus. Functionally, negative regulator in the hedgehog/smoothened signaling pathway. Down-regulates GLI1-mediated transactivation of target genes. Down-regulates GLI2-mediated transactivation of target genes. Part of a corepressor complex that acts on DNA-bound GLI1. May also act by linking GLI1 to BTRC and thereby targeting GLI1 to degradation by the proteasome. Sequesters GLI1, GLI2 and GLI3 in the cytoplasm, this effect is overcome by binding of STK36 to both SUFU and a GLI protein. Negative regulator of beta-catenin signaling. Regulates the formation of either the repressor form (GLI3R) or the activator form (GLI3A) of the full-length form of GLI3 (GLI3FL). GLI3FL is complexed with SUFU in the cytoplasm and is maintained in a neutral state. Without the Hh signal, the SUFU-GLI3 complex is recruited to cilia, leading to the efficient processing of GLI3FL into GLI3R. When Hh signaling is initiated, SUFU dissociates from GLI3FL and the latter translocates to the nucleus, where it is phosphorylated, destabilized, and converted to a transcriptional activator (GLI3A). Required for normal embryonic development. Required for the proper formation of hair follicles and the control of epidermal differentiation. This is Suppressor of fused homolog from Homo sapiens (Human).